Consider the following 102-residue polypeptide: Small ribosomal subunit protein uS10 (102 aa).

It belongs to the universal ribosomal protein uS10 family. Part of the 30S ribosomal subunit.

Involved in the binding of tRNA to the ribosomes. The chain is Small ribosomal subunit protein uS10 from Leptospira borgpetersenii serovar Hardjo-bovis (strain JB197).